The chain runs to 220 residues: Probable chemoreceptor glutamine deamidase CheD (220 aa).

Belongs to the CheD family.

It carries out the reaction L-glutaminyl-[protein] + H2O = L-glutamyl-[protein] + NH4(+). Its function is as follows. Probably deamidates glutamine residues to glutamate on methyl-accepting chemotaxis receptors (MCPs), playing an important role in chemotaxis. This chain is Probable chemoreceptor glutamine deamidase CheD, found in Cupriavidus metallidurans (strain ATCC 43123 / DSM 2839 / NBRC 102507 / CH34) (Ralstonia metallidurans).